The primary structure comprises 427 residues: Type II methyltransferase M1.BsuMI (427 aa).

The region spanning 84–427 (INIADLFSGC…SYLLALHQLR (344 aa)) is the SAM-dependent MTase C5-type domain. Residue Cys-176 is part of the active site.

It belongs to the class I-like SAM-binding methyltransferase superfamily. C5-methyltransferase family. In terms of assembly, monomer. May form a complex with YdiP, also seems to be active alone.

It catalyses the reaction a 2'-deoxycytidine in DNA + S-adenosyl-L-methionine = a 5-methyl-2'-deoxycytidine in DNA + S-adenosyl-L-homocysteine + H(+). Somewhat inhibited by MgCl(2) and spermidine, strongly inhibited by MnCl(2). Functionally, a methylase, recognizes the double-stranded sequence 5'-YTCGAR-3', methylates C-3 on both strands, and protects the DNA from cleavage by the BsuMI endonuclease. This Bacillus subtilis (strain 168) protein is Type II methyltransferase M1.BsuMI (ydiO).